Here is a 684-residue protein sequence, read N- to C-terminus: Histone-lysine N-methyltransferase SETMAR (684 aa).

Positions 1–345 are histone-lysine N-methyltransferase; it reads MFAEAAKTTR…RLTLETMKMM (345 aa). The Pre-SET domain maps to 73–136; sequence PGCICVKTPC…HCRNRVVQKG (64 aa). Zn(2+)-binding residues include Cys-75, Cys-77, Cys-82, Cys-87, Cys-89, Cys-118, Cys-122, Cys-124, and Cys-128. Positions 139-263 constitute an SET domain; the sequence is FHFQVFKTHK…PEEELSYDYS (125 aa). Residues 149-151, Tyr-192, Arg-220, and 223-224 contribute to the S-adenosyl-L-methionine site; these read KGW and NH. Positions 226, 287, 289, and 294 each coordinate Zn(2+). The region spanning 283–299 is the Post-SET domain; it reads LRKPCYCGAKSCTAFLP. Residues 346-684 form a mariner transposase Hsmar1 region; that stretch reads LDKKQIRAIF…CVDCNGSYFD (339 aa). 2 consecutive DNA-binding regions (H-T-H motif) follow at residues 364–395 and 428–448; these read KAAE…KFCK and TTRE…RHLK. A Mg(2+)-binding site is contributed by Asp-496. An N6-methyllysine modification is found at Lys-498. Ser-508 is subject to Phosphoserine; by CHEK1. Asp-588 provides a ligand contact to Mg(2+).

This sequence in the N-terminal section; belongs to the class V-like SAM-binding methyltransferase superfamily. In the C-terminal section; belongs to the mariner transposase family. Homodimer. Interacts with PRPF19; required for SETMAR recruitment to damaged DNA sites. Interacts with PCNA. Interacts with TOP2A; stimulates TOP2A topoisomerase activity. May interact with RAD9A and/or RAD9B. It depends on Mg(2+) as a cofactor. Methylated. Methylation regulates activity in DNA decatenation. In terms of processing, phosphorylated at Ser-508 by CHEK1 and dephosphorylated by protein phosphatase 2A/PP2A. Phosphorylation at Ser-508 is enhanced by DNA damage and promotes recruitment to damaged DNA. It stimulates DNA repair and impairs replication fork restart. As to expression, widely expressed, with highest expression in placenta and ovary and lowest expression in skeletal muscle.

It localises to the nucleus. The protein localises to the chromosome. The enzyme catalyses L-lysyl(36)-[histone H3] + 2 S-adenosyl-L-methionine = N(6),N(6)-dimethyl-L-lysyl(36)-[histone H3] + 2 S-adenosyl-L-homocysteine + 2 H(+). Protein derived from the fusion of a methylase with the transposase of an Hsmar1 transposon that plays a role in DNA double-strand break repair, stalled replication fork restart and DNA integration. DNA-binding protein, it is indirectly recruited to sites of DNA damage through protein-protein interactions. Also has kept a sequence-specific DNA-binding activity recognizing the 19-mer core of the 5'-terminal inverted repeats (TIRs) of the Hsmar1 element and displays a DNA nicking and end joining activity. In parallel, has a histone methyltransferase activity and methylates 'Lys-4' and 'Lys-36' of histone H3. Specifically mediates dimethylation of H3 'Lys-36' at sites of DNA double-strand break and may recruit proteins required for efficient DSB repair through non-homologous end-joining. Also regulates replication fork processing, promoting replication fork restart and regulating DNA decatenation through stimulation of the topoisomerase activity of TOP2A. In Homo sapiens (Human), this protein is Histone-lysine N-methyltransferase SETMAR.